The chain runs to 498 residues: Probable malate:quinone oxidoreductase (498 aa).

It belongs to the MQO family. FAD serves as cofactor.

It catalyses the reaction (S)-malate + a quinone = a quinol + oxaloacetate. Its pathway is carbohydrate metabolism; tricarboxylic acid cycle; oxaloacetate from (S)-malate (quinone route): step 1/1. The sequence is that of Probable malate:quinone oxidoreductase from Prochlorococcus marinus (strain AS9601).